Reading from the N-terminus, the 108-residue chain is Large ribosomal subunit protein uL11 (108 aa).

Belongs to the universal ribosomal protein uL11 family. As to quaternary structure, part of the ribosomal stalk of the 50S ribosomal subunit. Interacts with L10 and the large rRNA to form the base of the stalk. L10 forms an elongated spine to which L12 dimers bind in a sequential fashion forming a multimeric L10(L12)X complex.

In terms of biological role, forms part of the ribosomal stalk which helps the ribosome interact with GTP-bound translation factors. In Aeropyrum pernix (strain ATCC 700893 / DSM 11879 / JCM 9820 / NBRC 100138 / K1), this protein is Large ribosomal subunit protein uL11 (rpl11).